The chain runs to 170 residues: UPF0251 protein MA_1017 (170 aa).

This sequence belongs to the UPF0251 family.

This chain is UPF0251 protein MA_1017, found in Methanosarcina acetivorans (strain ATCC 35395 / DSM 2834 / JCM 12185 / C2A).